The chain runs to 3603 residues: Plipastatin synthase subunit D (3603 aa).

Residues Ile-7–Ala-306 are condensation 1. Positions Ile-7 to Asn-1043 are domain 1 (proline-activating). Positions Thr-490–Ile-889 are adenylation 1. The Carrier 1 domain maps to Ala-966–Glu-1041. The residue at position 1001 (Ser-1001) is an O-(pantetheine 4'-phosphoryl)serine. A condensation 2 region spans residues Lys-1053–Ala-1334. Residues Lys-1053–Arg-2069 form a domain 2 (glutamine-activating) region. The interval Thr-1521–Val-1924 is adenylation 2. Residues Ala-1997 to Thr-2072 form the Carrier 2 domain. At Ser-2032 the chain carries O-(pantetheine 4'-phosphoryl)serine. The condensation 3 stretch occupies residues Lys-2084–Glu-2374. The tract at residues Lys-2084–Ile-3596 is domain 3 (proline-activating). The adenylation 3 stretch occupies residues Thr-2560–Val-2956. The Carrier 3 domain maps to Pro-3034–Asp-3108. Ser-3069 carries the O-(pantetheine 4'-phosphoryl)serine modification. The interval Val-3116–Ile-3596 is epimerization.

This sequence belongs to the ATP-dependent AMP-binding enzyme family. Pantetheine 4'-phosphate is required as a cofactor.

Its function is as follows. This protein is a multifunctional enzyme, able to activate and polymerize the amino acids Pro, Gln and Tyr as part of the biosynthesis of the lipopeptide antibiotic plipastatin. The Tyr residue is further epimerized to the D-isomer form. The activation sites for these amino acids consist of individual domains. The sequence is that of Plipastatin synthase subunit D (ppsD) from Bacillus subtilis (strain 168).